Consider the following 196-residue polypeptide: Imidazoleglycerol-phosphate dehydratase (196 aa).

Belongs to the imidazoleglycerol-phosphate dehydratase family.

Its subcellular location is the cytoplasm. It catalyses the reaction D-erythro-1-(imidazol-4-yl)glycerol 3-phosphate = 3-(imidazol-4-yl)-2-oxopropyl phosphate + H2O. The protein operates within amino-acid biosynthesis; L-histidine biosynthesis; L-histidine from 5-phospho-alpha-D-ribose 1-diphosphate: step 6/9. This Clostridium botulinum (strain 657 / Type Ba4) protein is Imidazoleglycerol-phosphate dehydratase.